The primary structure comprises 634 residues: RING finger protein 207 (634 aa).

Residues 25 to 63 form an RING-type zinc finger; it reads CHLCQEQYEHPCLLDCYHTFCASCLRGRVADSRLTCPVC. The B box-type; atypical zinc finger occupies 93 to 145; sequence EETVQCANCDLECKKQDVDAMYYCNTCCQPLCRDCRETTHKAKMFSRHEIVSL. Zn(2+) is bound by residues Cys98, Cys101, Cys127, and His132. The disordered stretch occupies residues 575 to 634; sequence YEDSTSTADTQPSNELSCNTEDNWTLNSLSEETNPKNKDYYRTNKQKNTTDSTNRKEIPM. Residues 577-606 show a composition bias toward polar residues; that stretch reads DSTSTADTQPSNELSCNTEDNWTLNSLSEE. The span at 607–616 shows a compositional bias: basic and acidic residues; that stretch reads TNPKNKDYYR.

The protein resides in the cytoplasm. Functionally, plays a role in cardiac repolarization possibly by stabilizing membrane expression of the potassium channel kcnh6a/zerg, or by assisting its synthesis, folding or export from the endoplasmic reticulum, in a heat shock protein-dependent manner. This chain is RING finger protein 207 (rnf207b), found in Danio rerio (Zebrafish).